Consider the following 632-residue polypeptide: tRNA uridine 5-carboxymethylaminomethyl modification enzyme MnmG (632 aa).

Residues 13-18, valine 125, and serine 180 contribute to the FAD site; that span reads GGGHAG. 273-287 is an NAD(+) binding site; that stretch reads GPRYCPSIEDKVMRF. An FAD-binding site is contributed by glutamine 370.

This sequence belongs to the MnmG family. In terms of assembly, homodimer. Heterotetramer of two MnmE and two MnmG subunits. Requires FAD as cofactor.

The protein localises to the cytoplasm. Its function is as follows. NAD-binding protein involved in the addition of a carboxymethylaminomethyl (cmnm) group at the wobble position (U34) of certain tRNAs, forming tRNA-cmnm(5)s(2)U34. The protein is tRNA uridine 5-carboxymethylaminomethyl modification enzyme MnmG of Proteus mirabilis (strain HI4320).